A 729-amino-acid chain; its full sequence is Neurochondrin (729 aa).

An N-acetylserine modification is found at Ser2. Ser2 is modified (phosphoserine). 2 S-palmitoyl cysteine lipidation sites follow: Cys3 and Cys4. An Asymmetric dimethylarginine modification is found at Arg75. Ser448 is modified (phosphoserine).

Belongs to the neurochondrin family. Interacts with MCHR1. Interacts with SEMA4C. Interacts with DIAPH1 (via FH3 domain). Interacts with GRM5. Post-translationally, palmitoylated. Palmitoylation by ZDHHC1, ZDHHC3 and ZDHHC11 regulates the association of NCDN with endosome membranes. May also be palmitoylated by ZDHHC7.

Its subcellular location is the cytoplasm. The protein resides in the cytosol. It localises to the endosome membrane. The protein localises to the cell projection. It is found in the dendrite. Its subcellular location is the postsynapse. In terms of biological role, probably involved in signal transduction, in the nervous system, via increasing cell surface localization of GRM5 and positively regulating its signaling. Required for the spatial learning process. Acts as a negative regulator of Ca(2+)-calmodulin-dependent protein kinase 2 (CaMK2) phosphorylation. May play a role in modulating melanin-concentrating hormone-mediated functions via its interaction with MCHR1 that interferes with G protein-coupled signal transduction. May be involved in bone metabolism. May also be involved in neurite outgrowth. This is Neurochondrin (NCDN) from Bos taurus (Bovine).